Reading from the N-terminus, the 317-residue chain is Putative 2-hydroxyacid dehydrogenase SAOUHSC_02577 (317 aa).

Residues 155 to 156 (EI), 234 to 236 (ASR), and aspartate 260 contribute to the NAD(+) site. Arginine 236 is an active-site residue. The active site involves glutamate 265. Histidine 283 serves as the catalytic Proton donor. 283–286 (HIGN) contacts NAD(+).

This sequence belongs to the D-isomer specific 2-hydroxyacid dehydrogenase family.

The chain is Putative 2-hydroxyacid dehydrogenase SAOUHSC_02577 from Staphylococcus aureus (strain NCTC 8325 / PS 47).